Here is a 221-residue protein sequence, read N- to C-terminus: N-(5'-phosphoribosyl)anthranilate isomerase (221 aa).

The protein belongs to the TrpF family.

It carries out the reaction N-(5-phospho-beta-D-ribosyl)anthranilate = 1-(2-carboxyphenylamino)-1-deoxy-D-ribulose 5-phosphate. It functions in the pathway amino-acid biosynthesis; L-tryptophan biosynthesis; L-tryptophan from chorismate: step 3/5. This Parabacteroides distasonis (strain ATCC 8503 / DSM 20701 / CIP 104284 / JCM 5825 / NCTC 11152) protein is N-(5'-phosphoribosyl)anthranilate isomerase.